A 194-amino-acid polypeptide reads, in one-letter code: Fe/S biogenesis protein NfuA (194 aa).

[4Fe-4S] cluster-binding residues include C152 and C155.

This sequence belongs to the NfuA family. In terms of assembly, homodimer. [4Fe-4S] cluster is required as a cofactor.

Its function is as follows. Involved in iron-sulfur cluster biogenesis. Binds a 4Fe-4S cluster, can transfer this cluster to apoproteins, and thereby intervenes in the maturation of Fe/S proteins. Could also act as a scaffold/chaperone for damaged Fe/S proteins. The chain is Fe/S biogenesis protein NfuA from Ectopseudomonas mendocina (strain ymp) (Pseudomonas mendocina).